The chain runs to 694 residues: Follicle-stimulating hormone receptor (694 aa).

A signal peptide spans 1–17; it reads MAFLWISFLVFLGSGSG. 2 cysteine pairs are disulfide-bonded: Cys-18–Cys-25 and Cys-23–Cys-32. In terms of domain architecture, LRRNT spans 18-46; sequence CHHRICHCSDRVFICQESKVTEIPSDIPR. Residues 18–367 lie on the Extracellular side of the membrane; that stretch reads CHHRICHCSD…EDIMGYNFLR (350 aa). LRR repeat units follow at residues 49–72, 73–97, 98–118, 119–143, 144–169, 170–192, 193–216, 217–240, and 241–259; these read VEMRFVLTKLQVIPRGAFSGFRDL, EKIEISQNDALEVIEADVFSNLPKL, HEIRIEKANNLVLIDPEAFWN, LPNLRYLLISNTGIKHLPAVYKIQS, HQKVLLDIQDNINIRTIERNSFAGLS, SESEILWLNKNGIQEIQNQAFNG, TQLDELNLSDNINLEDLPNGIFQG, ANGPVILDISRTRIHSLPSDGLKN, and LKKLKARSAYNFKTLPNLD. 2 N-linked (GlcNAc...) asparagine glycosylation sites follow: Asn-191 and Asn-199. Asn-268 carries N-linked (GlcNAc...) asparagine glycosylation. Cystine bridges form between Cys-275–Cys-347, Cys-276–Cys-292, Cys-276–Cys-357, and Cys-292–Cys-339. Asn-293 carries an N-linked (GlcNAc...) asparagine glycan. Residue Tyr-336 is modified to Sulfotyrosine. A helical transmembrane segment spans residues 368 to 388; that stretch reads VLIWFISILSITGNIVVLVIL. At 389–399 the chain is on the cytoplasmic side; it reads ITSQYKLTVPR. Residues 400 to 422 traverse the membrane as a helical segment; the sequence is FLMCNLAFADLCIGIYLLLIASV. The Extracellular segment spans residues 423-444; sequence DIHTKSQYHNYAIDWQTGAGCD. Cys-443 and Cys-518 are joined by a disulfide. A helical membrane pass occupies residues 445–466; that stretch reads AAGFFTVFASELSVYTLTAITL. Residues 467-486 lie on the Cytoplasmic side of the membrane; it reads ERWHTITYAMQLDRKVRLRH. A helical membrane pass occupies residues 487-509; sequence AASIMLIGWIFAFSVALLPIFGV. Residues 510 to 529 are Extracellular-facing; that stretch reads SSYMKVSICLPMDIDSPLSQ. A helical transmembrane segment spans residues 530-551; the sequence is FYVISLLVLNVLASVIICTCYT. Topologically, residues 552-574 are cytoplasmic; sequence HIYFTVRNPNIISSTSDAKIAKR. A helical membrane pass occupies residues 575–598; the sequence is MAMLIFTDFLCMAPISFFAISASV. The Extracellular segment spans residues 599-609; the sequence is KMPLITVSKSK. The helical transmembrane segment at 610–631 threads the bilayer; that stretch reads ILLVLFYPINSCANPFLYAVFT. Residues 632 to 694 are Cytoplasmic-facing; sequence KTFRRDFFIL…YKLVPLNHLS (63 aa).

Belongs to the G-protein coupled receptor 1 family. FSH/LSH/TSH subfamily. As to quaternary structure, homotrimer. Functions as a homotrimer binding the FSH hormone heterodimer composed of CGA and FSHB. Interacts with ARRB2. Interacts with APPL2; interaction is independent of follicle stimulating hormone stimulation. Post-translationally, N-glycosylated; indirectly required for FSH-binding, possibly via a conformational change that allows high affinity binding of hormone. Sulfated.

It localises to the cell membrane. Its function is as follows. G protein-coupled receptor for follitropin, the follicle-stimulating hormone. Through cAMP production activates the downstream PI3K-AKT and ERK1/ERK2 signaling pathways. The polypeptide is Follicle-stimulating hormone receptor (FSHR) (Notamacropus eugenii (Tammar wallaby)).